A 134-amino-acid polypeptide reads, in one-letter code: Complexin-2 (134 aa).

The tract at residues 1–114 is disordered; sequence MDFVMKQALG…CGDEDEEDEE (114 aa). Positions 15–85 are enriched in basic and acidic residues; the sequence is DMGKMLGGDE…EEKEAEEKAA (71 aa). The stretch at 29–84 forms a coiled coil; the sequence is DAQKKEEERQEALRQQEDERKQKHIRMETEREKVRQQIRDKYGLKKKEEKEAEEKA.

The protein belongs to the complexin/synaphin family. Binds to the SNARE core complex containing SNAP25, VAMP2 and STX1A. Nervous system. Present in electric organ (at protein level).

It is found in the cytoplasm. The protein resides in the cytosol. Its subcellular location is the presynapse. The protein localises to the nucleus. It localises to the perikaryon. Its function is as follows. Positively regulates a late step in synaptic vesicle exocytosis. The protein is Complexin-2 of Narke japonica (Japanese sleeper ray).